The following is a 67-amino-acid chain: Conotoxin Pu5.1 (67 aa).

A signal peptide spans 1–22; the sequence is MRCVPVFVILLLLIASTPSVDA. Positions 23-51 are excised as a propeptide; sequence RPNPKDDVPLASFHEDANGILQMLWKKGR. W63 is modified (tryptophan amide).

The protein belongs to the conotoxin T superfamily. Contains 2 disulfide bonds that can be either 'C1-C3, C2-C4' or 'C1-C4, C2-C3', since these disulfide connectivities have been observed for conotoxins with cysteine framework V (for examples, see AC P0DQQ7 and AC P81755). In terms of tissue distribution, expressed by the venom duct.

It is found in the secreted. This chain is Conotoxin Pu5.1, found in Conus pulicarius (Flea-bitten cone).